Here is a 212-residue protein sequence, read N- to C-terminus: Nitrogen regulatory protein P-II homolog (212 aa).

Composition is skewed to low complexity over residues methionine 1–alanine 12, threonine 32–arginine 46, and proline 63–alanine 74. Residues methionine 1–arginine 68 constitute a chloroplast transit peptide. The disordered stretch occupies residues methionine 1–alanine 74. ATP is bound by residues glycine 117–glutamine 121 and glycine 170–lysine 173. A Mg(2+)-binding site is contributed by glycine 119.

Belongs to the P(II) protein family. Homodimer.

The protein localises to the plastid. It is found in the chloroplast. In terms of biological role, participates in sensing carbon and organic nitrogen status and regulates some steps of primary carbon and nitrogen metabolism. The protein is Nitrogen regulatory protein P-II homolog (GLB) of Oryza sativa subsp. japonica (Rice).